A 197-amino-acid polypeptide reads, in one-letter code: MKPFTVHKGKVAGIDRANIDTDQIIPKQFLKRIERTGFGKFLFYDWRYIDGEKPNPDFELNRPENEGATILVANENFGCGSSREHAPWALQDYGFQAIIAPSFADIFYNNCLKNGLLPIRLAKQDVEYLLRESTKADYELTISLEDQRVYDDSGFERTFDIDPYRKQLLLKGWDEIDLTFVYEPYIAEYEKKHCPMS.

Belongs to the LeuD family. LeuD type 1 subfamily. Heterodimer of LeuC and LeuD.

The enzyme catalyses (2R,3S)-3-isopropylmalate = (2S)-2-isopropylmalate. The protein operates within amino-acid biosynthesis; L-leucine biosynthesis; L-leucine from 3-methyl-2-oxobutanoate: step 2/4. Its function is as follows. Catalyzes the isomerization between 2-isopropylmalate and 3-isopropylmalate, via the formation of 2-isopropylmaleate. This chain is 3-isopropylmalate dehydratase small subunit, found in Geobacillus sp. (strain WCH70).